The primary structure comprises 432 residues: Cyclic GMP-AMP synthase (432 aa).

110 to 115 (QGSFQY) lines the GTP pocket. Mg(2+)-binding residues include D129 and D131. R180 lines the ATP pocket. D191 is a binding site for Mg(2+). Residue S255 participates in ATP binding. Residues K283, S297, and D344 each contribute to the GTP site. Positions 413–432 (LNAPSKEPSSKPINKTMVSG) are disordered. Residues 423-432 (KPINKTMVSG) show a composition bias toward polar residues.

The protein belongs to the CD-NTase family. A01 subfamily. The cofactor is Mg(2+).

The enzyme catalyses GTP + ATP = 3',3'-cGAMP + 2 diphosphate. Cyclic nucleotide synthase (second messenger synthase) of a CBASS antivirus system. CBASS (cyclic oligonucleotide-based antiphage signaling system) provides immunity against bacteriophage. The CD-NTase protein synthesizes cyclic nucleotides in response to infection; these serve as specific second messenger signals. The signals activate a diverse range of effectors, leading to bacterial cell death and thus abortive phage infection. A type II-C(GA) CBASS system. Its function is as follows. Catalyzes the synthesis of 3'3'-cyclic GMP-AMP (3'3'-cGAMP) from GTP and ATP, a second messenger in cell signal transduction. Is also able to produce c-di-AMP and c-di-GMP from ATP and GTP, respectively; however, 3'3'-cGAMP is the dominant molecule produced by DncV in vivo, contrary to the 2'3'-cGAMP produced by eukaryotes. By producing cGAMP, down-regulates csgD expression and expression of flagellum regulon genes, which leads to the down-regulation of rdar biofilm formation and flagellum-mediated swimming and swarming motility in a temperature-dependent manner. Controls the activity of cGAMP-activated phospholipase CapV, a patatin-like lipase that is a direct 3',3'-cGAMP receptor encoded in the dncV operon. This chain is Cyclic GMP-AMP synthase, found in Escherichia coli.